The following is an 883-amino-acid chain: Pyruvate, phosphate dikinase 2 (883 aa).

The disordered stretch occupies residues 1–21 (MAPAPCGRSSQRVFHFGKGKS). The Tele-phosphohistidine intermediate role is filled by His-465. Substrate contacts are provided by Arg-571, Arg-628, Glu-757, Gly-778, Thr-779, Asn-780, and Asp-781. Glu-757 provides a ligand contact to Mg(2+). Asp-781 contacts Mg(2+). The Proton donor role is filled by Cys-843.

It belongs to the PEP-utilizing enzyme family. Mg(2+) is required as a cofactor. As to expression, expressed in leaves, roots and stems.

It is found in the cytoplasm. The enzyme catalyses pyruvate + phosphate + ATP = phosphoenolpyruvate + AMP + diphosphate + H(+). Formation of phosphoenolpyruvate, which is the primary acceptor of CO(2) in C4 and some Crassulacean acid metabolism plants. The protein is Pyruvate, phosphate dikinase 2 of Zea mays (Maize).